The chain runs to 201 residues: IMP cyclohydrolase (201 aa).

Belongs to the archaeal IMP cyclohydrolase family.

The catalysed reaction is IMP + H2O = 5-formamido-1-(5-phospho-D-ribosyl)imidazole-4-carboxamide. The protein operates within purine metabolism; IMP biosynthesis via de novo pathway; IMP from 5-formamido-1-(5-phospho-D-ribosyl)imidazole-4-carboxamide: step 1/1. In terms of biological role, catalyzes the cyclization of 5-formylamidoimidazole-4-carboxamide ribonucleotide to IMP. This is IMP cyclohydrolase from Methanocella arvoryzae (strain DSM 22066 / NBRC 105507 / MRE50).